We begin with the raw amino-acid sequence, 140 residues long: Large ribosomal subunit protein bL17 (140 aa).

Belongs to the bacterial ribosomal protein bL17 family. Part of the 50S ribosomal subunit. Contacts protein L32.

In Ruegeria pomeroyi (strain ATCC 700808 / DSM 15171 / DSS-3) (Silicibacter pomeroyi), this protein is Large ribosomal subunit protein bL17.